Reading from the N-terminus, the 462-residue chain is ATP synthase subunit beta (462 aa).

151-158 (GGAGVGKT) contributes to the ATP binding site.

This sequence belongs to the ATPase alpha/beta chains family. As to quaternary structure, F-type ATPases have 2 components, CF(1) - the catalytic core - and CF(0) - the membrane proton channel. CF(1) has five subunits: alpha(3), beta(3), gamma(1), delta(1), epsilon(1). CF(0) has four main subunits: a(1), b(1), b'(1) and c(9-12).

Its subcellular location is the cell inner membrane. The enzyme catalyses ATP + H2O + 4 H(+)(in) = ADP + phosphate + 5 H(+)(out). In terms of biological role, produces ATP from ADP in the presence of a proton gradient across the membrane. The catalytic sites are hosted primarily by the beta subunits. The protein is ATP synthase subunit beta of Pelodictyon phaeoclathratiforme (strain DSM 5477 / BU-1).